We begin with the raw amino-acid sequence, 807 residues long: Dynein axonemal intermediate chain 4 (807 aa).

2 stretches are compositionally biased toward polar residues: residues 1–11 (MHSSPTSTRKQ) and 22–31 (PRKSISFINP). 2 disordered regions span residues 1–44 (MHSS…AASN) and 300–320 (YSSK…DSES). Low complexity predominate over residues 32 to 43 (SKSSAGKGYAAS). The span at 308-317 (AKDRDPKIQD) shows a compositional bias: basic and acidic residues. 6 WD repeats span residues 493 to 533 (QSSY…NIPV), 542 to 590 (KHLG…DCHD), 617 to 657 (SRQA…QYLE), 661 to 701 (GHKG…PFLS), 704 to 743 (PTTY…LDPL), and 749 to 788 (NPGI…TASD).

Part of the multisubunit axonemal dynein complex formed at least of two heavy chains and a number of intermediate and light chains. Associated with axonemal dynein subunits such as, DNAH2, DNAI3, and DYNLT1. Interacts with DYNLT1. Highly expressed in tissues containing motile cilia, including the trachea, lung, oviduct, and testis.

It is found in the cytoplasm. Its subcellular location is the cytoskeleton. The protein resides in the flagellum axoneme. It localises to the cilium axoneme. The protein localises to the dynein axonemal particle. Plays a critical role in the assembly of axonemal dynein complex, thereby playing a role in ciliary motility. This is Dynein axonemal intermediate chain 4 (Dnai4) from Mus musculus (Mouse).